A 467-amino-acid chain; its full sequence is Cysteine--tRNA ligase (467 aa).

Cysteine 27 contributes to the Zn(2+) binding site. Residues 29 to 39 (PTVYNYIHIGN) carry the 'HIGH' region motif. Zn(2+) contacts are provided by cysteine 207, histidine 232, and glutamate 236. Residues 264–268 (KMSKS) carry the 'KMSKS' region motif. Lysine 267 contributes to the ATP binding site.

This sequence belongs to the class-I aminoacyl-tRNA synthetase family. In terms of assembly, monomer. Requires Zn(2+) as cofactor.

It is found in the cytoplasm. It catalyses the reaction tRNA(Cys) + L-cysteine + ATP = L-cysteinyl-tRNA(Cys) + AMP + diphosphate. The chain is Cysteine--tRNA ligase from Caldanaerobacter subterraneus subsp. tengcongensis (strain DSM 15242 / JCM 11007 / NBRC 100824 / MB4) (Thermoanaerobacter tengcongensis).